A 633-amino-acid chain; its full sequence is DNA topoisomerase 4 subunit B (633 aa).

ATP contacts are provided by residues tyrosine 5, asparagine 45, aspartate 72, 113–119, and lysine 337; that span reads GLHGVGA. The 116-residue stretch at 419–534 folds into the Toprim domain; it reads KELFIVEGDS…LGHVYLALPP (116 aa). Positions 425, 499, and 501 each coordinate Mg(2+).

The protein belongs to the type II topoisomerase family. ParE type 2 subfamily. Heterotetramer composed of ParC and ParE. Requires Mg(2+) as cofactor. Mn(2+) is required as a cofactor. Ca(2+) serves as cofactor.

It carries out the reaction ATP-dependent breakage, passage and rejoining of double-stranded DNA.. Its function is as follows. Topoisomerase IV is essential for chromosome segregation. It relaxes supercoiled DNA. Performs the decatenation events required during the replication of a circular DNA molecule. The chain is DNA topoisomerase 4 subunit B from Mycoplasma genitalium (strain ATCC 33530 / DSM 19775 / NCTC 10195 / G37) (Mycoplasmoides genitalium).